We begin with the raw amino-acid sequence, 380 residues long: Alkaline protease (380 aa).

The first 27 residues, 1–27, serve as a signal peptide directing secretion; the sequence is MKKPLGKIVASTALLISVAFSSSIASA. A propeptide spanning residues 28 to 111 is cleaved from the precursor; sequence AEEAKEKYLI…IEEDAEVTTM (84 aa). Residues 34-111 form the Inhibitor I9 domain; that stretch reads KYLIGFNEQE…IEEDAEVTTM (78 aa). Position 113 (Gln-113) interacts with Ca(2+). In terms of domain architecture, Peptidase S8 spans 116–379; the sequence is PWGISRVQAP…SGLVNAEAAT (264 aa). The active-site Charge relay system is the Asp-143. Asp-151 lines the Ca(2+) pocket. Catalysis depends on His-173, which acts as the Charge relay system. Ca(2+) contacts are provided by Leu-184, Asn-186, Ile-188, Val-190, Ala-274, Tyr-276, and Ala-279. The Charge relay system role is filled by Ser-326.

Belongs to the peptidase S8 family. Ca(2+) serves as cofactor.

The protein resides in the secreted. This Shouchella clausii (Alkalihalobacillus clausii) protein is Alkaline protease.